Consider the following 120-residue polypeptide: NAD(P)H-quinone oxidoreductase subunit 3, chloroplastic (120 aa).

The next 3 helical transmembrane spans lie at 7–27 (YNYF…AFSI), 64–84 (MFAL…PWAM), and 89–109 (LGIP…IGLI).

The protein belongs to the complex I subunit 3 family. NDH is composed of at least 16 different subunits, 5 of which are encoded in the nucleus.

It localises to the plastid. Its subcellular location is the chloroplast thylakoid membrane. It catalyses the reaction a plastoquinone + NADH + (n+1) H(+)(in) = a plastoquinol + NAD(+) + n H(+)(out). The enzyme catalyses a plastoquinone + NADPH + (n+1) H(+)(in) = a plastoquinol + NADP(+) + n H(+)(out). Functionally, NDH shuttles electrons from NAD(P)H:plastoquinone, via FMN and iron-sulfur (Fe-S) centers, to quinones in the photosynthetic chain and possibly in a chloroplast respiratory chain. The immediate electron acceptor for the enzyme in this species is believed to be plastoquinone. Couples the redox reaction to proton translocation, and thus conserves the redox energy in a proton gradient. This Anthoceros angustus (Hornwort) protein is NAD(P)H-quinone oxidoreductase subunit 3, chloroplastic.